A 139-amino-acid chain; its full sequence is Thyrotropin subunit beta (139 aa).

A signal peptide spans 1–20; that stretch reads MELSVAMCGLLCLLFSQAVP. Disulfide bonds link Cys-22/Cys-72, Cys-36/Cys-87, Cys-39/Cys-127, Cys-47/Cys-103, Cys-51/Cys-105, and Cys-108/Cys-115. The N-linked (GlcNAc...) asparagine glycan is linked to Asn-43.

Belongs to the glycoprotein hormones subunit beta family. In terms of assembly, heterodimer of a common alpha chain and a unique beta chain which confers biological specificity to thyrotropin, lutropin, follitropin and gonadotropin.

It localises to the secreted. Indispensable for the control of thyroid structure and metabolism. May play some role in the biological processes of the immature fishes. This is Thyrotropin subunit beta (tshb) from Salmo salar (Atlantic salmon).